The chain runs to 486 residues: Heme A synthase COX15 (486 aa).

Residues 1-33 (MLFRNIEVGRQAAKLLTRTSSRLAWQSIGASRN) constitute a mitochondrion transit peptide. Residues 34–85 (ISTIRQQIRKTQLYNFKKTVSIRPFSLSSPVFKPHVASESNPIESRLKTSKN) are Mitochondrial matrix-facing. The chain crosses the membrane as a helical span at residues 86–106 (VAYWLIGTSGLVFGIVVLGGL). The Mitochondrial intermembrane portion of the chain corresponds to 107–170 (TRLTESGLSI…FIFFMEWIHR (64 aa)). His169 serves as a coordination point for heme o. Residues 171 to 191 (LWGRAIGAVFILPAVYFAVSK) traverse the membrane as a helical segment. Over 192–200 (KTSGHVNKR) the chain is Mitochondrial matrix. The chain crosses the membrane as a helical span at residues 201-221 (LFGLAGLLGLQGFVGWWMVKS). Residues 222–243 (GLDQEQLDARKSKPTVSQYRLT) are Mitochondrial intermembrane-facing. Residues 244 to 264 (THLGTAFFLYMGMLWTGLEIL) traverse the membrane as a helical segment. Residue His245 participates in heme o binding. Residues 265-293 (RECKWIKNPVQAISLFKKLDNPAIGPMRK) lie on the Mitochondrial matrix side of the membrane. Residues 294–314 (ISLALLAVSFLTAMSGGMVAG) form a helical membrane-spanning segment. The Mitochondrial intermembrane segment spans residues 315-364 (LDAGWVYNTWPKMGERWFPSSRELMDENFCRREDKKDLWWRNLLENPVTV). The helical transmembrane segment at 365–387 (QLVHRTCAYVAFTSVLAAHMYAI) threads the bilayer. His368 serves as a coordination point for heme b. The Mitochondrial matrix segment spans residues 388-402 (KKKAVIPRNAMTSLH). Residues 403–423 (VMMGVVTLQATLGILTILYLV) traverse the membrane as a helical segment. A topological domain (mitochondrial intermembrane) is located at residue Pro424. The chain crosses the membrane as a helical span at residues 425 to 445 (ISLASIHQAGALALLTSSLVF). Position 431 (His431) interacts with heme b. Residues 446–486 (ASQLRKPRAPMRNVIITLPHSSKVTSGKILSEASKLASKPL) are Mitochondrial matrix-facing.

Belongs to the COX15/CtaA family. Type 2 subfamily. Forms 200-350 kDa oligomeric complexes independent on heme binding. In addition to form homooligomeric complexes, a portion also associates with the mitochondrial respiratory supercomplexes. Interacts with CcO assembly factors PET117, SHY1, COA3 and COA1, CcO subunit COX13 and cytochrome b-c1 subunit COR1. Heme b serves as cofactor.

The protein localises to the mitochondrion inner membrane. It catalyses the reaction Fe(II)-heme o + 2 A + H2O = Fe(II)-heme a + 2 AH2. Its pathway is porphyrin-containing compound metabolism; heme A biosynthesis; heme A from heme O: step 1/1. In terms of biological role, catalyzes the second reaction in the biosynthesis of heme A, a prosthetic group of mitochondrial cytochrome c oxidase (CcO). Heme A is synthesized from heme B by two sequential enzymatic reactions catalyzed by heme O synthase (HOS/COX10) and heme A synthase (HAS/COX15). HAS catalyzes the conversion of heme O to heme A by two successive hydroxylations of the methyl group at C8, in a reaction that involves matrix ferredoxin YAH1 and ferredoxin reductase ARH1. The first hydroxylation forms heme I, the second hydroxylation results in an unstable dihydroxymethyl group, which spontaneously dehydrates, resulting in the formyl group of heme A. May also play a secondary role in CcO assembly. Plays a role in the maturation of COX1, the heme A-containing structural CcO subunit, possibly by interacting with the COX1-containing sub-assembly complexes that form prior to heme A insertion. May also positively regulate the upstream enzymatic reaction, farnesylation of heme B by HOS/COX10. The polypeptide is Heme A synthase COX15 (Saccharomyces cerevisiae (strain ATCC 204508 / S288c) (Baker's yeast)).